The chain runs to 223 residues: Trk system potassium uptake protein TrkA (223 aa).

The 118-residue stretch at 1–118 folds into the RCK N-terminal domain; that stretch reads MHIVIMGCGR…QRLGIPTVAT (118 aa). NAD(+)-binding positions include 7 to 11, D30, 73 to 74, and R98; these read GCGRV and SS. Residues 133-215 enclose the RCK C-terminal domain; that stretch reads SGAEPLWRDP…VHKVEAAFAK (83 aa).

In terms of biological role, part of a potassium transport system. The polypeptide is Trk system potassium uptake protein TrkA (trkA) (Streptomyces coelicolor (strain ATCC BAA-471 / A3(2) / M145)).